A 192-amino-acid chain; its full sequence is Ion-translocating oxidoreductase complex subunit B (192 aa).

Residues M1–S26 are hydrophobic. Positions E32–V91 constitute a 4Fe-4S domain. Residues C49, C52, C57, C74, C117, C120, C123, C127, C147, C150, C153, and C157 each contribute to the [4Fe-4S] cluster site. 4Fe-4S ferredoxin-type domains follow at residues M108 to R137 and A138 to V167.

It belongs to the 4Fe4S bacterial-type ferredoxin family. RnfB subfamily. The complex is composed of six subunits: RsxA, RsxB, RsxC, RsxD, RsxE and RsxG. It depends on [4Fe-4S] cluster as a cofactor.

The protein resides in the cell inner membrane. Part of a membrane-bound complex that couples electron transfer with translocation of ions across the membrane. Required to maintain the reduced state of SoxR. This chain is Ion-translocating oxidoreductase complex subunit B, found in Salmonella arizonae (strain ATCC BAA-731 / CDC346-86 / RSK2980).